A 947-amino-acid chain; its full sequence is Bifunctional glutamine synthetase adenylyltransferase/adenylyl-removing enzyme (947 aa).

The segment at 1 to 440 is adenylyl removase; the sequence is MTPLSSPLSQ…VFNELIGDDE (440 aa). The tract at residues 450–947 is adenylyl transferase; sequence SEPWREVWQD…ASWRKWLVAV (498 aa).

This sequence belongs to the GlnE family. The cofactor is Mg(2+).

It carries out the reaction [glutamine synthetase]-O(4)-(5'-adenylyl)-L-tyrosine + phosphate = [glutamine synthetase]-L-tyrosine + ADP. The enzyme catalyses [glutamine synthetase]-L-tyrosine + ATP = [glutamine synthetase]-O(4)-(5'-adenylyl)-L-tyrosine + diphosphate. Functionally, involved in the regulation of glutamine synthetase GlnA, a key enzyme in the process to assimilate ammonia. When cellular nitrogen levels are high, the C-terminal adenylyl transferase (AT) inactivates GlnA by covalent transfer of an adenylyl group from ATP to specific tyrosine residue of GlnA, thus reducing its activity. Conversely, when nitrogen levels are low, the N-terminal adenylyl removase (AR) activates GlnA by removing the adenylyl group by phosphorolysis, increasing its activity. The regulatory region of GlnE binds the signal transduction protein PII (GlnB) which indicates the nitrogen status of the cell. The sequence is that of Bifunctional glutamine synthetase adenylyltransferase/adenylyl-removing enzyme from Salmonella enteritidis PT4 (strain P125109).